The following is an 886-amino-acid chain: Inter-alpha-trypsin inhibitor heavy chain H3 (886 aa).

Residues 1-18 form the signal peptide; that stretch reads MWWPYLVLALLSGLEASG. A propeptide spanning residues 19 to 30 is cleaved from the precursor; it reads FPRSPLRLLGKR. Residues 26–155 enclose the VIT domain; the sequence is LLGKRSLPEG…KVTFELTYEE (130 aa). Residue N88 is glycosylated (N-linked (GlcNAc...) asparagine). The 161-residue stretch at 279-439 folds into the VWFA domain; that stretch reads PKNIVFVIDI…YNFLETMALE (161 aa). The N-linked (GlcNAc...) asparagine glycan is linked to N577. Position 646 is an aspartate 1-(chondroitin 4-sulfate)-ester (D646). Residues 647–886 constitute a propeptide that is removed on maturation; that stretch reads PHFIIQVPGK…HTDYIVPSLF (240 aa).

This sequence belongs to the ITIH family. In terms of assembly, I-alpha-I plasma protease inhibitors are assembled from one or two heavy chains (HC) and one light chain, bikunin. Pre-alpha-inhibitor (P-alpha-I) is composed of ITIH3/HC3 and bikunin. In terms of processing, heavy chains are linked to bikunin via chondroitin 4-sulfate esterified to the alpha-carboxyl of the C-terminal aspartate after propeptide cleavage.

It is found in the secreted. In terms of biological role, may act as a carrier of hyaluronan in serum or as a binding protein between hyaluronan and other matrix protein, including those on cell surfaces in tissues to regulate the localization, synthesis and degradation of hyaluronan which are essential to cells undergoing biological processes. The chain is Inter-alpha-trypsin inhibitor heavy chain H3 (ITIH3) from Mesocricetus auratus (Golden hamster).